The chain runs to 804 residues: Exocyst complex component 6 (804 aa).

Belongs to the SEC15 family. The exocyst complex is composed of EXOC1, EXOC2, EXOC3, EXOC4, EXOC5, EXOC6, EXOC7 and EXOC8. Interacts with CNTRL. Interacts with RAB11A in a GTP-dependent manner.

The protein localises to the cytoplasm. It localises to the perinuclear region. Its subcellular location is the cell projection. It is found in the growth cone. The protein resides in the midbody. The protein localises to the midbody ring. Functionally, component of the exocyst complex involved in the docking of exocytic vesicles with fusion sites on the plasma membrane. Together with RAB11A, RAB3IP, RAB8A, PARD3, PRKCI, ANXA2, CDC42 and DNMBP promotes transcytosis of PODXL to the apical membrane initiation sites (AMIS), apical surface formation and lumenogenesis. The polypeptide is Exocyst complex component 6 (Exoc6) (Rattus norvegicus (Rat)).